A 220-amino-acid chain; its full sequence is Translation initiation factor IF-3 (220 aa).

Positions 182–220 (TPLVKKDDKEEPATRAVRTITAPPRPTSARLASKPAGNG) are disordered. The segment covering 185 to 194 (VKKDDKEEPA) has biased composition (basic and acidic residues).

The protein belongs to the IF-3 family. Monomer.

The protein localises to the cytoplasm. IF-3 binds to the 30S ribosomal subunit and shifts the equilibrium between 70S ribosomes and their 50S and 30S subunits in favor of the free subunits, thus enhancing the availability of 30S subunits on which protein synthesis initiation begins. The sequence is that of Translation initiation factor IF-3 from Synechococcus sp. (strain WH7803).